The following is a 418-amino-acid chain: Argininosuccinate synthase (418 aa).

16-24 (AYSGGLDTS) serves as a coordination point for ATP. Tyr95 contributes to the L-citrulline binding site. ATP is bound at residue Gly125. L-aspartate-binding residues include Thr127, Asn131, and Asp132. Asn131 lines the L-citrulline pocket. L-citrulline-binding residues include Arg135, Ser183, Glu267, and Tyr279.

The protein belongs to the argininosuccinate synthase family. Type 1 subfamily. In terms of assembly, homotetramer.

Its subcellular location is the cytoplasm. The catalysed reaction is L-citrulline + L-aspartate + ATP = 2-(N(omega)-L-arginino)succinate + AMP + diphosphate + H(+). It functions in the pathway amino-acid biosynthesis; L-arginine biosynthesis; L-arginine from L-ornithine and carbamoyl phosphate: step 2/3. This Bifidobacterium adolescentis (strain ATCC 15703 / DSM 20083 / NCTC 11814 / E194a) protein is Argininosuccinate synthase.